A 520-amino-acid chain; its full sequence is GMP synthase [glutamine-hydrolyzing] (520 aa).

Positions 13–205 (KIIVLDYGSQ…ALNICKAKGD (193 aa)) constitute a Glutamine amidotransferase type-1 domain. Residue C90 is the Nucleophile of the active site. Residues H179 and E181 contribute to the active site. Positions 206 to 395 (WSMDNFIDMQ…LGMPDHIVWR (190 aa)) constitute a GMPS ATP-PPase domain. 233–239 (SGGVDSS) is a binding site for ATP.

As to quaternary structure, homodimer.

It catalyses the reaction XMP + L-glutamine + ATP + H2O = GMP + L-glutamate + AMP + diphosphate + 2 H(+). Its pathway is purine metabolism; GMP biosynthesis; GMP from XMP (L-Gln route): step 1/1. Its function is as follows. Catalyzes the synthesis of GMP from XMP. The sequence is that of GMP synthase [glutamine-hydrolyzing] from Streptococcus pneumoniae serotype 2 (strain D39 / NCTC 7466).